The primary structure comprises 1520 residues: Accessory colonization factor AcfD (1520 aa).

An N-terminal signal peptide occupies residues 1-16 (MKIRIVSLIVLGFLIG). Cys-17 carries the N-palmitoyl cysteine lipid modification. A lipid anchor (S-diacylglycerol cysteine) is attached at Cys-17. Residues 1085–1388 (GNRQPTGQWA…MFAQLKEWAE (304 aa)) form the Peptidase M60 domain.

Its subcellular location is the cell membrane. In Vibrio cholerae serotype O1 (strain ATCC 39315 / El Tor Inaba N16961), this protein is Accessory colonization factor AcfD (acfD).